Consider the following 156-residue polypeptide: ATP synthase subunit b (156 aa).

Residues 12-32 (VAFFIFVLFCMKFVWPPVIAA) form a helical membrane-spanning segment.

It belongs to the ATPase B chain family. F-type ATPases have 2 components, F(1) - the catalytic core - and F(0) - the membrane proton channel. F(1) has five subunits: alpha(3), beta(3), gamma(1), delta(1), epsilon(1). F(0) has three main subunits: a(1), b(2) and c(10-14). The alpha and beta chains form an alternating ring which encloses part of the gamma chain. F(1) is attached to F(0) by a central stalk formed by the gamma and epsilon chains, while a peripheral stalk is formed by the delta and b chains.

It localises to the cell inner membrane. In terms of biological role, f(1)F(0) ATP synthase produces ATP from ADP in the presence of a proton or sodium gradient. F-type ATPases consist of two structural domains, F(1) containing the extramembraneous catalytic core and F(0) containing the membrane proton channel, linked together by a central stalk and a peripheral stalk. During catalysis, ATP synthesis in the catalytic domain of F(1) is coupled via a rotary mechanism of the central stalk subunits to proton translocation. Its function is as follows. Component of the F(0) channel, it forms part of the peripheral stalk, linking F(1) to F(0). This Pseudomonas aeruginosa (strain UCBPP-PA14) protein is ATP synthase subunit b.